A 666-amino-acid chain; its full sequence is Fructose-1,6-bisphosphatase class 3 (666 aa).

This sequence belongs to the FBPase class 3 family. Requires Mn(2+) as cofactor.

It carries out the reaction beta-D-fructose 1,6-bisphosphate + H2O = beta-D-fructose 6-phosphate + phosphate. Its pathway is carbohydrate biosynthesis; gluconeogenesis. This Parabacteroides distasonis (strain ATCC 8503 / DSM 20701 / CIP 104284 / JCM 5825 / NCTC 11152) protein is Fructose-1,6-bisphosphatase class 3.